Consider the following 160-residue polypeptide: Small ribosomal subunit protein uS9 (160 aa).

The protein belongs to the universal ribosomal protein uS9 family.

This chain is Small ribosomal subunit protein uS9, found in Rhodopseudomonas palustris (strain ATCC BAA-98 / CGA009).